The primary structure comprises 142 residues: Hemoglobin subunit alpha (142 aa).

S1 is modified (N-acetylserine). The 142-residue stretch at 1–142 (SLSDKDKAAV…LSLALAEKYR (142 aa)) folds into the Globin domain. Heme b is bound by residues H59 and H88.

The protein belongs to the globin family. In terms of assembly, heterotetramer of two alpha chains and two beta chains. Red blood cells.

In terms of biological role, involved in oxygen transport from gills to the various peripheral tissues. The chain is Hemoglobin subunit alpha from Lycodes reticulatus (Arctic eelpout).